We begin with the raw amino-acid sequence, 347 residues long: Epimerase family protein SDR39U1 homolog, chloroplastic (347 aa).

A chloroplast-targeting transit peptide spans 1-37 (MELLCSPTSLSSSFALSSALLVPRSFSMPGTRRFMVL). NADP(+)-binding positions include 54–57 (TGFI), 76–77 (TR), 115–119 (LAGLP), and arginine 136.

Can form homodimers. As to expression, expressed in leaves, stems and flower buds.

The protein resides in the plastid. It localises to the chloroplast inner membrane. Its subcellular location is the chloroplast. Its function is as follows. Putative NADP-dependent oxidoreductase that acts as a positive regulator of chloroplast division. May play a role at an early stage of the division process. The sequence is that of Epimerase family protein SDR39U1 homolog, chloroplastic from Arabidopsis thaliana (Mouse-ear cress).